Consider the following 97-residue polypeptide: uncharacterized protein (97 aa).

This is an uncharacterized protein from Salmonella typhi.